Here is a 246-residue protein sequence, read N- to C-terminus: Probable transcriptional regulatory protein CLB_3102 (246 aa).

The protein belongs to the TACO1 family.

It localises to the cytoplasm. The sequence is that of Probable transcriptional regulatory protein CLB_3102 from Clostridium botulinum (strain ATCC 19397 / Type A).